Consider the following 600-residue polypeptide: MSMRTEYCGLVTEHLLGQTVSLCGWVQRRRDHGGVIFIDLRDREGLVQVVCDPDRAEMFATAEGVRNEFCVQIKGLVRNRPEGTVNAGLKSGKIEVLCHELNVLNASVTPPFQLDDDNLSETTRLTHRVLDLRRPQMQHNLRLRYRVAIEARKYLDEQGFIDIETPMLTKSTPEGARDYLVPSRVNAGQFFALPQSPQLFKQLLMVANFDRYYQITKCFRDEDLRADRQPEFTQIDCETSFLGEQEIRDLFEDMIRHIFKTTIDVELDAKFPVMPYSEAMARFGSDKPDLRVQLEFTELTDAMKDVDFKVFSTPANAKDGRVAALRVPKGGELSRGDIDGYTEFVRIYGAKGLAWIKVNEKAKGRDGLQSPIVKNLHDASIAAILERTGAEDGDIIFFAADRAKVVNDSLGALRLKIGHSEFGKANGLVQAGWKPLWVVDFPMFEYDDEDARYVAAHHPFTSPKDEHLEYLETDPGRCLAKAYDMVLNGWEIGGGSVRIHREEVQSKVFRALKIGAEEAQLKFGFLLDALQYGAPPHGGIAFGLDRIVTMMAGADSIRDVIAFPKTQRAQDLLTQAPSPVDERQLRELHIRLRQPEQPKA.

E174 lines the L-aspartate pocket. The tract at residues 198 to 201 (QLFK) is aspartate. R220 serves as a coordination point for L-aspartate. ATP-binding positions include 220–222 (RDE) and Q229. L-aspartate is bound at residue H457. An ATP-binding site is contributed by E491. R498 lines the L-aspartate pocket. Residue 543 to 546 (GLDR) coordinates ATP.

Belongs to the class-II aminoacyl-tRNA synthetase family. Type 1 subfamily. In terms of assembly, homodimer.

The protein localises to the cytoplasm. The enzyme catalyses tRNA(Asx) + L-aspartate + ATP = L-aspartyl-tRNA(Asx) + AMP + diphosphate. Aspartyl-tRNA synthetase with relaxed tRNA specificity since it is able to aspartylate not only its cognate tRNA(Asp) but also tRNA(Asn). Reaction proceeds in two steps: L-aspartate is first activated by ATP to form Asp-AMP and then transferred to the acceptor end of tRNA(Asp/Asn). The protein is Aspartate--tRNA(Asp/Asn) ligase of Burkholderia orbicola (strain MC0-3).